Consider the following 601-residue polypeptide: Glutathione-regulated potassium-efflux system protein KefB (601 aa).

A run of 13 helical transmembrane segments spans residues 4–24, 29–49, 55–75, 87–107, 111–131, 152–172, 177–197, 207–227, 230–250, 262–282, 284–304, 324–344, and 356–376; these read ADLL…VPLA, IGAV…GLGF, EILH…GLEL, IFGV…GLLM, FLWQ…TAMA, VLLF…LLAG, HFDW…LIGG, FIAA…LVLS, LFMD…GVLL, AIDP…GMSL, LGVL…LVVI, MQFA…FSTA, and ALLL…MKGI. The region spanning 400–519 is the RCK N-terminal domain; that stretch reads KPQVIVVGFG…AGVTQFSRET (120 aa).

Belongs to the monovalent cation:proton antiporter 2 (CPA2) transporter (TC 2.A.37) family. KefB subfamily. As to quaternary structure, interacts with the regulatory subunit KefG.

The protein resides in the cell inner membrane. Its function is as follows. Pore-forming subunit of a potassium efflux system that confers protection against electrophiles. Catalyzes K(+)/H(+) antiport. This chain is Glutathione-regulated potassium-efflux system protein KefB, found in Salmonella dublin (strain CT_02021853).